The chain runs to 168 residues: Secretory-abundant heat soluble protein 33020 (168 aa).

The first 19 residues, 1–19, serve as a signal peptide directing secretion; it reads MARFLVALALFGVVAMTAA. Positions 26–57 are SAHS-c1; that stretch reads EWSGKPWLGKFVAEVSDKSENWEAFVDALGLP. The interval 72 to 100 is SAHS-c2; the sequence is YKQGEHYHHILSLPDKNINKDIEFTLGQE. The SAHS-c3 stretch occupies residues 113–162; sequence KYFEDGNKLVADVSIPAKGKSIHDVYDVQGDQLIKSYKVGDVVAKKWFKK.

Belongs to the Secretory-abundant heat soluble protein (SAHS) family.

It is found in the secreted. Functionally, secreted heat soluble protein acting as a molecular shield in water-deficient condition. Tardigrade-specific intrinsically disordered proteins (TDPs) are essential for desiccation tolerance by forming non-crystalline amorphous solids upon desiccation, and this vitrified state mirrors their protective capabilities. The protein is Secretory-abundant heat soluble protein 33020 of Hypsibius exemplaris (Freshwater tardigrade).